A 325-amino-acid chain; its full sequence is Beta-1,3-galactosyltransferase brn (325 aa).

Over 1-7 (MQSKHRK) the chain is Cytoplasmic. The chain crosses the membrane as a helical; Signal-anchor for type II membrane protein span at residues 8-28 (LLLRCLLVLPLILLVDYCGLL). The Lumenal segment spans residues 29-325 (THLHELNFER…WNECRSANYA (297 aa)). N-linked (GlcNAc...) asparagine glycans are attached at residues Asn149 and Asn166.

Belongs to the glycosyltransferase 31 family.

Its subcellular location is the golgi apparatus membrane. It catalyses the reaction a ganglioside GM2 (d18:1(4E)) + UDP-alpha-D-galactose = a ganglioside GM1 (d18:1(4E)) + UDP + H(+). Its function is as follows. Neurogenic protein essential for the development and maintenance of epithelial structure. Required in the germline for establishing the follicular epithelium and for determining the dorsal-ventral polarity. Collaborates with Notch on the apical surface of follicle cells to mediate germline-follicle cell adhesion. Brn has a role in chorion formation. The protein is Beta-1,3-galactosyltransferase brn (brn) of Drosophila melanogaster (Fruit fly).